The sequence spans 116 residues: Small ribosomal subunit protein bS16 (116 aa).

Residues 88 to 116 (RNNPKAAVPGKRMAELAKKKAERAAASAE) form a disordered region. The span at 99-110 (RMAELAKKKAER) shows a compositional bias: basic and acidic residues.

The protein belongs to the bacterial ribosomal protein bS16 family.

In Cereibacter sphaeroides (strain ATCC 17025 / ATH 2.4.3) (Rhodobacter sphaeroides), this protein is Small ribosomal subunit protein bS16.